Here is a 139-residue protein sequence, read N- to C-terminus: Ribulose bisphosphate carboxylase small subunit (139 aa).

Belongs to the RuBisCO small chain family. In terms of assembly, heterohexadecamer of 8 large and 8 small subunits.

The protein localises to the plastid. The protein resides in the chloroplast. In terms of biological role, ruBisCO catalyzes two reactions: the carboxylation of D-ribulose 1,5-bisphosphate, the primary event in carbon dioxide fixation, as well as the oxidative fragmentation of the pentose substrate in the photorespiration process. Both reactions occur simultaneously and in competition at the same active site. Although the small subunit is not catalytic it is essential for maximal activity. This chain is Ribulose bisphosphate carboxylase small subunit, found in Chrysotila carterae (Marine alga).